The chain runs to 248 residues: tRNA pseudouridine synthase A (248 aa).

Asp-53 (nucleophile) is an active-site residue. Residue Tyr-111 participates in substrate binding.

It belongs to the tRNA pseudouridine synthase TruA family. In terms of assembly, homodimer.

The enzyme catalyses uridine(38/39/40) in tRNA = pseudouridine(38/39/40) in tRNA. Functionally, formation of pseudouridine at positions 38, 39 and 40 in the anticodon stem and loop of transfer RNAs. The chain is tRNA pseudouridine synthase A from Listeria monocytogenes serotype 4b (strain CLIP80459).